We begin with the raw amino-acid sequence, 357 residues long: MAENKRTRWQRRPGTTGGKLPWNDWRNATTWRKATQLLLLAMNIYIAITFWYWVRYYETASSTTFVARPGGIEGWLPIAGLMNLKYSLVTGQLPSVHAAAMLLLVAFIVISLLLKKAFCSWLCPVGTLSELIGDLGNKLFGRQCVLPRWLDIPLRGVKYLLLSFFIYIALLMPAQAIHYFMLSPYSVVMDVKMLDFFRHMGTATLISVTVLLIASLFIRHAWCRYLCPYGALMGVVSLLSPFKIRRNAESCIDCGKCAKNCPSRIPVDKLIQVRTVECTGCMTCVESCPVASTLTFSLQKPAANKKAFALSGWLMTLLVLGIMFAVIGYAMYAGVWQSPVPEELYRRLIPQAPMIGH.

Residues 1–36 (MAENKRTRWQRRPGTTGGKLPWNDWRNATTWRKATQ) lie on the Cytoplasmic side of the membrane. A helical transmembrane segment spans residues 37-54 (LLLLAMNIYIAITFWYWV). Residues 55–91 (RYYETASSTTFVARPGGIEGWLPIAGLMNLKYSLVTG) are Periplasmic-facing. Residues 92–114 (QLPSVHAAAMLLLVAFIVISLLL) traverse the membrane as a helical segment. Over 115 to 158 (KKAFCSWLCPVGTLSELIGDLGNKLFGRQCVLPRWLDIPLRGVK) the chain is Cytoplasmic. Residues 159–181 (YLLLSFFIYIALLMPAQAIHYFM) form a helical membrane-spanning segment. The Periplasmic portion of the chain corresponds to 182 to 195 (LSPYSVVMDVKMLD). Residues 196-218 (FFRHMGTATLISVTVLLIASLFI) form a helical membrane-spanning segment. Residues 219-309 (RHAWCRYLCP…KPAANKKAFA (91 aa)) are Cytoplasmic-facing. 2 consecutive 4Fe-4S ferredoxin-type domains span residues 242 to 270 (FKIR…VDKL) and 269 to 299 (KLIQ…FSLQ). Residues cysteine 251, cysteine 254, cysteine 257, cysteine 261, cysteine 278, cysteine 281, cysteine 284, and cysteine 288 each contribute to the [4Fe-4S] cluster site. The helical transmembrane segment at 310–332 (LSGWLMTLLVLGIMFAVIGYAMY) threads the bilayer. The Periplasmic segment spans residues 333–357 (AGVWQSPVPEELYRRLIPQAPMIGH).

It is found in the cell inner membrane. The sequence is that of Putative electron transport protein YccM (yccM) from Escherichia coli (strain K12).